The chain runs to 529 residues: Probable DNA helicase MPN_340 (529 aa).

The UvrD-like helicase ATP-binding domain maps to glutamate 2–isoleucine 285. ATP is bound at residue serine 23 to threonine 30.

The protein belongs to the helicase family. UvrD subfamily.

The catalysed reaction is Couples ATP hydrolysis with the unwinding of duplex DNA by translocating in the 3'-5' direction.. The enzyme catalyses ATP + H2O = ADP + phosphate + H(+). The protein is Probable DNA helicase MPN_340 of Mycoplasma pneumoniae (strain ATCC 29342 / M129 / Subtype 1) (Mycoplasmoides pneumoniae).